Consider the following 109-residue polypeptide: UPF0060 membrane protein HEAR0108 (109 aa).

The next 4 membrane-spanning stretches (helical) occupy residues 7-27 (VALF…PYLW), 33-53 (SIWL…LLSL), 63-83 (AAYG…VDGI), and 87-107 (NWDV…MFAP).

It belongs to the UPF0060 family.

The protein resides in the cell inner membrane. This chain is UPF0060 membrane protein HEAR0108, found in Herminiimonas arsenicoxydans.